The following is a 634-amino-acid chain: Chaperone protein HtpG (634 aa).

The a; substrate-binding stretch occupies residues 1–342 (MTVETDKQTL…SSDLSLNVSR (342 aa)). The segment at 343-559 (EILQSGPVVD…QGDLGLQMRQ (217 aa)) is b. Residues 560-634 (LLEASGQAVP…LNKLLLELSA (75 aa)) are c.

It belongs to the heat shock protein 90 family. As to quaternary structure, homodimer.

The protein resides in the cytoplasm. In terms of biological role, molecular chaperone. Has ATPase activity. The protein is Chaperone protein HtpG of Xanthomonas axonopodis pv. citri (strain 306).